A 191-amino-acid polypeptide reads, in one-letter code: Putative manganese efflux pump MntP (191 aa).

Helical transmembrane passes span Pro-3–Gly-23, Leu-37–Leu-57, Val-65–Ile-85, Trp-107–Phe-129, Cys-144–Gly-164, and Ile-169–Gly-189.

This sequence belongs to the MntP (TC 9.B.29) family.

It is found in the cell inner membrane. Functionally, probably functions as a manganese efflux pump. The protein is Putative manganese efflux pump MntP of Stenotrophomonas maltophilia (strain K279a).